Consider the following 146-residue polypeptide: 1,4-dihydroxy-2-naphthoyl-CoA hydrolase (146 aa).

Residue aspartate 15 is part of the active site.

This sequence belongs to the 4-hydroxybenzoyl-CoA thioesterase family. DHNA-CoA hydrolase subfamily.

The catalysed reaction is 1,4-dihydroxy-2-naphthoyl-CoA + H2O = 1,4-dihydroxy-2-naphthoate + CoA + H(+). It functions in the pathway cofactor biosynthesis; phylloquinone biosynthesis. The protein operates within quinol/quinone metabolism; 1,4-dihydroxy-2-naphthoate biosynthesis; 1,4-dihydroxy-2-naphthoate from chorismate: step 7/7. Functionally, catalyzes the hydrolysis of 1,4-dihydroxy-2-naphthoyl-CoA (DHNA-CoA) to 1,4-dihydroxy-2-naphthoate (DHNA), a reaction involved in phylloquinone (vitamin K1) biosynthesis. The protein is 1,4-dihydroxy-2-naphthoyl-CoA hydrolase of Picosynechococcus sp. (strain ATCC 27264 / PCC 7002 / PR-6) (Agmenellum quadruplicatum).